The primary structure comprises 72 residues: Cytochrome c oxidase subunit 2 (72 aa).

Over 1–14 the chain is Mitochondrial intermembrane; it reads MAHPSQLGFQDAAS. A helical transmembrane segment spans residues 15-45; sequence PVMEELLHFHDHALMIVFLISTLVLYIIVAM. Residues 46–72 lie on the Mitochondrial matrix side of the membrane; sequence VSTKLTNKYXLDSQEIEVIWTXLPAVI.

Belongs to the cytochrome c oxidase subunit 2 family. As to quaternary structure, component of the cytochrome c oxidase (complex IV, CIV), a multisubunit enzyme composed of 14 subunits. The complex is composed of a catalytic core of 3 subunits MT-CO1, MT-CO2 and MT-CO3, encoded in the mitochondrial DNA, and 11 supernumerary subunits COX4I, COX5A, COX5B, COX6A, COX6B, COX6C, COX7A, COX7B, COX7C, COX8 and NDUFA4, which are encoded in the nuclear genome. The complex exists as a monomer or a dimer and forms supercomplexes (SCs) in the inner mitochondrial membrane with NADH-ubiquinone oxidoreductase (complex I, CI) and ubiquinol-cytochrome c oxidoreductase (cytochrome b-c1 complex, complex III, CIII), resulting in different assemblies (supercomplex SCI(1)III(2)IV(1) and megacomplex MCI(2)III(2)IV(2)). Found in a complex with TMEM177, COA6, COX18, COX20, SCO1 and SCO2. Interacts with TMEM177 in a COX20-dependent manner. Interacts with COX20. Interacts with COX16. Cu cation serves as cofactor.

It is found in the mitochondrion inner membrane. It catalyses the reaction 4 Fe(II)-[cytochrome c] + O2 + 8 H(+)(in) = 4 Fe(III)-[cytochrome c] + 2 H2O + 4 H(+)(out). Component of the cytochrome c oxidase, the last enzyme in the mitochondrial electron transport chain which drives oxidative phosphorylation. The respiratory chain contains 3 multisubunit complexes succinate dehydrogenase (complex II, CII), ubiquinol-cytochrome c oxidoreductase (cytochrome b-c1 complex, complex III, CIII) and cytochrome c oxidase (complex IV, CIV), that cooperate to transfer electrons derived from NADH and succinate to molecular oxygen, creating an electrochemical gradient over the inner membrane that drives transmembrane transport and the ATP synthase. Cytochrome c oxidase is the component of the respiratory chain that catalyzes the reduction of oxygen to water. Electrons originating from reduced cytochrome c in the intermembrane space (IMS) are transferred via the dinuclear copper A center (CU(A)) of subunit 2 and heme A of subunit 1 to the active site in subunit 1, a binuclear center (BNC) formed by heme A3 and copper B (CU(B)). The BNC reduces molecular oxygen to 2 water molecules using 4 electrons from cytochrome c in the IMS and 4 protons from the mitochondrial matrix. In Gomphosus varius (Bird wrasse), this protein is Cytochrome c oxidase subunit 2 (mt-co2).